The primary structure comprises 2327 residues: MNTTDCFIAVVNAIKEVRALFLPRTAGKMEFTLHDGEKKVFYSRPNNHDNCWLNTILQLFRYVDEPFFDWVYNSPENLTLEAIKQLEELTGLELREGGPPALVIWNIKHLLHTGIGTASRPSEVCMVDGTDMCLADFHAGIFMKGREHAVFACVTSNGWYAIDDEDFYPWTPDPSDVLVFVPYDQEPLNEGWKASVQRKLKGAGQSSPATGSQNQSGNTGSIINNYYMQQYQNSMDTQLGDNAISGGSNEGSTDTTSTHTTNTQNNDWFSKLASSAFSGLFGALLADKKTEETTLLEDRILTTRNGHTTSTTQSSVGVTFGYATAEDSTSGPNTSGLETRVHQAERFFKMALFDWVPSQNFGHMHKVVLPHEPKGVYGGLVKSYAYMRNGWDVEVTAVGNQFNGGCLLVALVPEMGDISDREKYQLTLYPHQFINPRTNMTAHITVPYVGVNRYDQYKQHRPWTLVVMVVAPLTTNTAGAQQIKVYANIAPTNVHVAGELPSKEGIFPVACSDGYGNMVTTDPKTADPAYGKVYNPPRTALPGRFTNYLDVAEACPTFLMFENVPYVSTRTDGQRLLAKFDVSLAAKHMSNTYLAGLAQYYTQYTGTINLHFMFTGPTDAKARYMVAYVPPGMDAPDNPEEAAHCIHAEWDTGLNSKFTFSIPYISAADYAYTASHEAETTCVQGWVCVYQITHGKADADALVVSASAGKDFELRLPVDARQQTTTTGESADPVTTTVENYGGETQVQRRHHTDVAFVLDRFVKVTVSDNQHTLDVMQAHKDNIVGALLRAATYYFSDLEIAVTHTGKLTWVPNGAPVSALNNTTNPTAYHKGPVTRLALPYTAPHRVLATAYTGTTTYTASARGDLAHLTTTHARHLPTSFNFGAVKAETITELLVRMKRAELYCPRPILPIQPTGDRHKQPLVAPAKQLLNFDLLKLAGDVESNPGPFFFSDVRSNFSKLVETINQMQEDMSTKHGPDFNRLVSAFEELASGVKAIRTGLDEAKPWYKLIKLLSRLSCMAAVAARSKDPVLVAIMLADTGLEILDSTFVVKKISDSLSSLFHVPAPAFSFGAPILLAGLVKVASSFFRSTPEDLERAEKQLKARDINDIFAILKNGEWLVKLILAIRDWIKAWIASEEKFVTMTDLVPGILEKQRDLNDPSKYKDAKEWLDNTRQVCLKSGNVHIANLCKVVAPAPSKSRPEPVVVCLRGKSGQGKSFLANVLAQAISTHLTGRTDSVWYCPPDPDHFDGYNQQTVVVMDDLGQNPDGKDFKYFAQMVSTTGFIPPMASLEDKGKPFSSKVIIATTNLYSGFTPKTMVCPDALNRRFHFDIDVSAKDGYKINNKLDIIKALEDTHTNPVAMFQYDCALLNGMAVEMKRLQQDMFKPQPPLQNVYQLVQEVIERVELHEKVSSHPIFKQISIPSQKSVLYFLIEKGQHEAAIEFFEGMVHDSIKEELRPLIQQTSFVKRAFKRLKENFEIVALCLTLLANIVIMIRETHKRQKMVDDAVNEYIEKANITTDDQTLDEAEKNPLETSGASTVGFRERTLPGQKARDDVNSEPAQPTEEQPQAEGPYAGPLERQRPLKVRAKLPRQEGPYAGPMERQKPLKVKARAPVVKEGPYEGPVKKPVALKVKAKNLIVTESGAPPTDLQKMVMGNTKPVELILDGKTVAICCATGVFGTAYLVPRHLFAEKYDKIMLDGRALTDSDYRVFEFEIKVKGQDMLSDAALMVLHRGNRVRDITKHFRDVARMKKGTPVVGVINNADVGRLIFSGEALTYKDIVVCMDGDTMPGLFAYKAATKAGYCGGAVLAKDGADTFIVGTHSAGGNGVGYCSCVSRSMLLKMKAHIDPEPHHEGLIVDTRDVEERVHVMRKTKLAPTVAHGVFNPEFGPAALSNKDPRLNEGVVLDEVIFSKHKGDTKMSAEDKALFRRCAADYASRLHSVLGTANAPLSIYEAIKGVDGLDAMEPDTAPGLPWALQGKRRGALIDFENGTVGPEVEAALKLMEKREYKFACQTFLKDEIRPMEKVRAGKTRIVDVLPVEHILYTRMMIGRFCAQMHSNNGPQIGSAVGCNPDVDWQRFGTHFAQYRNVWDVDYSAFDANHCSDAMNIMFEEVFRTEFGFHPNAEWILKTLVNTEHAYENKRITVEGGMPSGCSATSIINTILNNIYVLYALRRHYEGVELDTYTMISYGDDIVVASDYDLDFEALKPHFKSLGQTITPADKSDKGFVLGHSITDVTFLKRHFHMDYGTGFYKPVMASKTLEAILSFARRGTIQEKLISVAGLAVHSGPDEYRRLFEPFQGLFEIPSYRSLYLRWVNAVCGDA.

The Peptidase C28 domain maps to 1-201 (MNTTDCFIAV…WKASVQRKLK (201 aa)). The Cytoplasmic portion of the chain corresponds to 1-1475 (MNTTDCFIAV…SFVKRAFKRL (1475 aa)). Residues C51, H148, and D163 each act as for leader protease activity in the active site. Disordered regions lie at residues 196–218 (VQRK…QSGN) and 238–265 (QLGD…NTQN). G202 carries the N-myristoyl glycine; by host lipid modification. 2 stretches are compositionally biased toward polar residues: residues 204–218 (GQSS…QSGN) and 238–251 (QLGD…SNEG). Residues 252–265 (STDTTSTHTTNTQN) show a composition bias toward low complexity. The antigenic epitope stretch occupies residues 787–795 (ALLRAATYY). The short motif at 864-866 (RGD) is the Cell attachment site element. The SF3 helicase domain maps to 1184-1348 (NVHIANLCKV…DGYKINNKLD (165 aa)). An ATP-binding site is contributed by 1212–1219 (GKSGQGKS). The stretch at 1476–1496 (KENFEIVALCLTLLANIVIMI) is an intramembrane region. Topologically, residues 1497 to 2327 (RETHKRQKMV…RWVNAVCGDA (831 aa)) are cytoplasmic. The disordered stretch occupies residues 1524–1584 (QTLDEAEKNP…PYAGPLERQR (61 aa)). The segment covering 1544–1558 (FRERTLPGQKARDDV) has biased composition (basic and acidic residues). O-(5'-phospho-RNA)-tyrosine occurs at positions 1576, 1599, and 1623. In terms of domain architecture, Peptidase C3 spans 1647-1843 (APPTDLQKMV…YCSCVSRSML (197 aa)). The active-site For protease 3C activity; Proton donor/acceptor is the H1690. Catalysis depends on for protease 3C activity residues D1728 and C1807. The short motif at 1873 to 1881 (MRKTKLAPT) is the Nuclear localization signal element. Residues 2091–2209 (RNVWDVDYSA…ASDYDLDFEA (119 aa)) form the RdRp catalytic domain. The active-site For RdRp activity is the D2195.

The protein belongs to the picornaviruses polyprotein family. As to quaternary structure, interacts with host ISG15. Interacts (via R-G-D motif) with host ITGAV/ITGB6. Interacts with host MAVS; this interaction inhibits binding of host TRAF3 to MAVS, thereby suppressing interferon-mediated responses. In terms of assembly, forms homooligomers. As to quaternary structure, homohexamer. Interacts with host VIM. Interacts with host BECN1. Interacts with host DCTN3. In terms of assembly, interacts with RNA-dependent RNA polymerase; this interaction allows 3B-1 to binds 2 polymerases and act as a primer. It also allows the recruitment of the RNA-dependent RNA polymerase to host membranes. As to quaternary structure, interacts with RNA-dependent RNA polymerase; this interaction allows 3B-2 to act as a primer. Interacts with RNA-dependent RNA polymerase; this interaction allows 3B-3 to act as a primer. In terms of assembly, interacts with 3B-1; this interaction allows 3B-1 to binds 2 polymerases and act as a primer. It also allows the recruitment of the RNA-dependent RNA polymerase to host membranes. Interacts with 3B-2; this interaction allows 3B-2 to act as a primer. Interacts with 3B-3; this interaction allows 3B-3 to act as a primer. Post-translationally, removes six residues from its own C-terminus, generating sLb(pro). In terms of processing, specific enzymatic cleavages in vivo by the viral proteases yield a variety of precursors and mature proteins. The polyprotein seems to be cotranslationally cleaved at the 2A/2B junction by a ribosomal skip from one codon to the next without formation of a peptide bond. This process would release the L-P1-2A peptide from the translational complex. During virion maturation, immature virions are rendered infectious following cleavage of VP0 into VP4 and VP2. This maturation seems to be an autocatalytic event triggered by the presence of RNA in the capsid and is followed by a conformational change of the particle. Post-translationally, myristoylation is required during RNA encapsidation and formation of the mature virus particle. In terms of processing, uridylylated by the polymerase and covalently linked to the 5'-end of genomic RNA. These uridylylated forms act as a nucleotide-peptide primer for the polymerase.

It is found in the host nucleus. It localises to the host cytoplasm. The protein localises to the virion. Its subcellular location is the host endoplasmic reticulum membrane. The protein resides in the host cytoplasmic vesicle membrane. The catalysed reaction is Autocatalytically cleaves itself from the polyprotein of the foot-and-mouth disease virus by hydrolysis of a Lys-|-Gly bond, but then cleaves host cell initiation factor eIF-4G at bonds -Gly-|-Arg- and -Lys-|-Arg-.. It carries out the reaction a ribonucleoside 5'-triphosphate + H2O = a ribonucleoside 5'-diphosphate + phosphate + H(+). The enzyme catalyses RNA(n) + a ribonucleoside 5'-triphosphate = RNA(n+1) + diphosphate. It catalyses the reaction Selective cleavage of Gln-|-Gly bond in the poliovirus polyprotein. In other picornavirus reactions Glu may be substituted for Gln, and Ser or Thr for Gly.. Its function is as follows. Autocatalytically cleaves itself from the polyprotein at the L/VP0 junction. Also cleaves the host translation initiation factors EIF4G1 and EIF4G3, in order to shut off the capped cellular mRNA transcription. Plays a role in counteracting host innate antiviral response using diverse mechanisms. Possesses a deubiquitinase activity acting on both 'Lys-48' and 'Lys-63'-linked polyubiquitin chains. In turn, inhibits the ubiquitination and subsequent activation of key signaling molecules of type I IFN response such as host RIGI, TBK1, TRAF3 and TRAF6. Inhibits host NF-kappa-B activity by inducing a decrease in RELA mRNA levels. Cleaves a peptide bond in the C-terminus of host ISG15, resulting in the damaging of this modifier that can no longer be attached to target proteins. Also cleaves host G3BP1 and G3BP2 in order to inhibit cytoplasmic stress granules assembly. In terms of biological role, lies on the inner surface of the capsid shell. After binding to the host receptor, the capsid undergoes conformational changes. Capsid protein VP4 is released, capsid protein VP1 N-terminus is externalized, and together, they shape a pore in the host membrane through which the viral genome is translocated into the host cell cytoplasm. After genome has been released, the channel shrinks. Functionally, forms an icosahedral capsid of pseudo T=3 symmetry with capsid proteins VP1 and VP3. The capsid is composed of 60 copies of each capsid protein organized in the form of twelve pentamers and encloses the viral positive strand RNA genome. Upon acidifcation in the endosome, dissociates into pentamers. Forms an icosahedral capsid of pseudo T=3 symmetry with capsid proteins VP0 and VP3. The capsid is composed of 60 copies of each capsid protein organized in the form of twelve pentamers and encloses the viral positive strand RNA genome. Upon acidifcation in the endosome, dissociates into pentamers. Its function is as follows. Forms an icosahedral capsid of pseudo T=3 symmetry with capsid proteins VP2 and VP3. The capsid is composed of 60 copies of each capsid protein organized in the form of twelve pentamers and encloses the viral positive strand RNA genome. Mediates cell entry by attachment to an integrin receptor, usually host ITGAV/ITGB6. In addition, targets host MAVS to suppress type I IFN pathway. Upon acidifcation in the endosome, dissociates into pentamers. In terms of biological role, mediates self-processing of the polyprotein by a translational effect termed 'ribosome skipping'. Mechanistically, 2A-mediated cleavage occurs between the C-terminal glycine and the proline of the downstream protein 2B. In the case of foot-and-mouth disease virus, the 2A oligopeptide is post-translationally 'trimmed' from the C-terminus of the upstream protein 1D by 3C proteinase. Functionally, plays an essential role in the virus replication cycle by acting as a viroporin. Creates a pore in the host endoplasmic reticulum and as a consequence releases Ca2+ in the cytoplasm of infected cell. In turn, high levels of cytoplasmic calcium may trigger membrane trafficking and transport of viral ER-associated proteins to viroplasms, sites of viral genome replication. Associates with and induces structural rearrangements of intracellular membranes. Triggers host autophagy by interacting with host BECN1 and thereby promotes viral replication. Participates in viral replication and interacts with host DHX9. Displays RNA-binding, nucleotide binding and NTPase activities. May play a role in virion morphogenesis and viral RNA encapsidation by interacting with the capsid protein VP3. Its function is as follows. Plays important roles in virus replication, virulence and host range. Cooperates with host DDX56 to inhibit IRF3 nuclear translocation and subsequent type I interferon production. In terms of biological role, covalently linked to the 5'-end of both the positive-strand and negative-strand genomic RNAs. Acts as a genome-linked replication primer. Functionally, cysteine protease that generates mature viral proteins from the precursor polyprotein. In addition to its proteolytic activity, binds to viral RNA and thus influences viral genome replication. RNA and substrate bind cooperatively to the protease. RNA-directed RNA polymerase 3D-POL replicates genomic and antigenomic RNA by recognizing replications specific signals. Covalently attaches UMP to a tyrosine of VPg, which is used to prime RNA synthesis. The positive stranded RNA genome is first replicated at virus induced membranous vesicles, creating a dsRNA genomic replication form. This dsRNA is then used as template to synthesize positive stranded RNA genomes. ss(+)RNA genomes are either translated, replicated or encapsidated. The protein is Genome polyprotein of Bos taurus (Bovine).